The sequence spans 993 residues: MKTEDDEMEYEASKEETVSEDKDFDDGIDYRTVIKENIFTMWYKTSLHGEFATLNCVITPKDQNLLQHIFDEDIQTSEAPQTVVLQGAAGIGKTTLLKKAVLEWADGNLYQQFTHVFYLNGKEISQVKEKSFAQLISKHWPSSEGPIEQVLSKPSSLLFIIDSFDELDFSFEEPQFALCKDWTQISPVSFLISSLLRKVMLPESYLLVATRSTAWKRLVPLLQKPQRVKLSGLSKNARMDYIHHLLKDKAWATSAIYSLRMNWRLFHMCHVCHMCQMICAVLKGQVEKGGRVEETCKTSTALFTYYICSLFPRIPVGCVTLPNETLLRSLCKAAVEGIWTMKHVLYQQNLRKHELTREDILLFLDAKVLQQDTEYENCYMFTHLHVQEFFAALFYLLRENLEEQDYPSEPFENLYLLLESNHIHDPHLEQMKCFLFGLLNKDRVRQLEETFNLTISMEVREELLACLEGLEKDDSSLSQLRFQDLLHCIYETQDQEFITQALMYFQKIIVRVDEEPQLRIYSFCLKHCHTLKTMRLTARADLKNMLDTAEMCLEGAAVQVIHYWQDLFSVLHTNESLIEMDLYESRLDESLMKILNEELSHPKCKLQKLIFRAVDFLNGCQDFTFLASNKKVTHLDLKETDLGVNGLKTLCEALKCKGCKLRVLRLASCDLNVARCQKLSNALQTNRSLVFLNLSLNNLSNDGVKSLCEVLENPNSSLERLALASCGLTKAGCKVLSSALTKSKRLTHLCLSDNVLEDEGIKLLSHTLKHPQCTLQSLVLRSCSFTPIGSEHLSTALLHNRSLVHLDLGQNKLADNGVKLLCHSLQQPHCNLQELELMSCVLTSKACGDLASVLVNNSNLWSLDLGHNILDDAGLNILCDALRNPNCHVQRLGLENCGLTPGCCQDLLGILSNNKSVIQMNLMKNALDHESIKNLCKVLRSPTCKMEFLALDKKEILKKKIKKFLVDVRINNPHLVIGPECPNTESGCWWNYF.

One can recognise an NACHT domain in the interval 81–403 (QTVVLQGAAG…FYLLRENLEE (323 aa)). 87–94 (GAAGIGKT) contacts ATP. LRR repeat units follow at residues 636–657 (DLKE…LKCK), 660–680 (KLRV…QKLS), 688–708 (SLVF…KSLC), 717–738 (SLER…VLSS), 745–765 (RLTH…KLLS), 774–795 (TLQS…HLST), 802–822 (SLVH…KLLC), 831–852 (NLQE…DLAS), and 859–879 (NLWS…NILC).

It belongs to the NLRP family. As to expression, detected in adult ovary and testis. Detected in oocytes and in germ cell elements in seminiferous tubules in adult testis (at protein level).

It localises to the cytoplasm. In terms of biological role, may be involved in inflammation and spermatogenesis. This is NACHT, LRR and PYD domains-containing protein 14 (Nlrp14) from Mus musculus (Mouse).